The primary structure comprises 253 residues: Triosephosphate isomerase (253 aa).

12–14 lines the substrate pocket; it reads NWK. H100 (electrophile) is an active-site residue. The active-site Proton acceptor is E170. Substrate contacts are provided by residues G176, S215, and 236–237; that span reads GG.

The protein belongs to the triosephosphate isomerase family. In terms of assembly, homodimer.

The protein resides in the cytoplasm. The catalysed reaction is D-glyceraldehyde 3-phosphate = dihydroxyacetone phosphate. Its pathway is carbohydrate biosynthesis; gluconeogenesis. It functions in the pathway carbohydrate degradation; glycolysis; D-glyceraldehyde 3-phosphate from glycerone phosphate: step 1/1. Involved in the gluconeogenesis. Catalyzes stereospecifically the conversion of dihydroxyacetone phosphate (DHAP) to D-glyceraldehyde-3-phosphate (G3P). The protein is Triosephosphate isomerase of Rhodopseudomonas palustris (strain BisA53).